Here is a 425-residue protein sequence, read N- to C-terminus: Aromatic prenyl transferase ptmE (425 aa).

L-tryptophan-binding positions include 83–84 and E92; that span reads GI. Substrate is bound by residues R107, K198, Y200, R265, K267, Y269, Y345, Y410, and Y414.

It belongs to the tryptophan dimethylallyltransferase family. In terms of assembly, homodimer.

It functions in the pathway secondary metabolite biosynthesis. Its function is as follows. Aromatic prenyl transferase; part of the gene cluster that mediates the biosynthesis of the indole diterpenes penitrems. The geranylgeranyl diphosphate (GGPP) synthase ptmG catalyzes the first step in penitrem biosynthesis via conversion of farnesyl pyrophosphate and isopentyl pyrophosphate into geranylgeranyl pyrophosphate (GGPP). Condensation of indole-3-glycerol phosphate with GGPP by the prenyl transferase ptmC then forms 3-geranylgeranylindole (3-GGI). Epoxidation by the FAD-dependent monooxygenase ptmM leads to a epoxidized-GGI that is substrate of the terpene cyclase ptmB for cyclization to yield paspaline. Paspaline is subsequently converted to 13-desoxypaxilline by the cytochrome P450 monooxygenase ptmP, the latter being then converted to paxilline by the cytochrome P450 monooxygenase ptmQ. Paxilline is converted to beta-paxitriol via C-10 ketoreduction by the short-chain dehydrogenase ptmH which can be monoprenylated at the C-20 by the indole diterpene prenyltransferase ptmD. A two-step elimination (acetylation and elimination) process performed by the O-acetyltransferase ptmV and ptmI leads to the production of the prenylated form of penijanthine. The FAD-linked oxidoreductase ptmO then converts the prenylated form of penijanthine into PC-M5 which is in turn transformed into PC-M4 by the aromatic dimethylallyltransferase ptmE. Five sequential oxidative transformations performed by the cytochrome P450 monooxygenases ptmK, ptmU, ptmL, ptmN and ptmJ yield the various penitrem compounds. PtmK, ptmU and ptmM are involved in the formation of the key bicyclic ring of penitrem C via the formation of the intermediates secopenitrem D and penitrem D. PtmL catalyzes the epoxidation of penitrem D and C to yield penitrem B and F, respectively. PtmJ catalyzes the last benzylic hydroxylation to convert penitrem B to prenitrem E and penitrem F to penitrem A. This chain is Aromatic prenyl transferase ptmE, found in Penicillium ochrochloron.